The chain runs to 108 residues: Small ribosomal subunit protein uS10 (108 aa).

It belongs to the universal ribosomal protein uS10 family. As to quaternary structure, part of the 30S ribosomal subunit.

Its function is as follows. Involved in the binding of tRNA to the ribosomes. This Ehrlichia canis (strain Jake) protein is Small ribosomal subunit protein uS10.